We begin with the raw amino-acid sequence, 598 residues long: Beta-galactosidase (598 aa).

An N-terminal signal peptide occupies residues 1 to 21; the sequence is MLRTTLAPLVLALALALPAAA. Glutamate 184 acts as the Proton donor in catalysis. The active-site Nucleophile is the glutamate 260.

Belongs to the glycosyl hydrolase 35 family.

The catalysed reaction is Hydrolysis of terminal non-reducing beta-D-galactose residues in beta-D-galactosides.. Its function is as follows. Preferentially hydrolyzes beta(1-&gt;3) galactosyl linkages over beta(1-&gt;4) linkages. The protein is Beta-galactosidase (bga) of Xanthomonas manihotis.